The following is a 601-amino-acid chain: Elongation factor 4 (601 aa).

The tr-type G domain maps to lysine 7–aspartate 189. Residues aspartate 19–threonine 24 and asparagine 136–aspartate 139 contribute to the GTP site.

The protein belongs to the TRAFAC class translation factor GTPase superfamily. Classic translation factor GTPase family. LepA subfamily.

The protein resides in the cell membrane. It catalyses the reaction GTP + H2O = GDP + phosphate + H(+). Required for accurate and efficient protein synthesis under certain stress conditions. May act as a fidelity factor of the translation reaction, by catalyzing a one-codon backward translocation of tRNAs on improperly translocated ribosomes. Back-translocation proceeds from a post-translocation (POST) complex to a pre-translocation (PRE) complex, thus giving elongation factor G a second chance to translocate the tRNAs correctly. Binds to ribosomes in a GTP-dependent manner. The protein is Elongation factor 4 of Clostridium novyi (strain NT).